Here is an 807-residue protein sequence, read N- to C-terminus: Microbial collagenase (807 aa).

The signal sequence occupies residues 1–27 (MSHLLPFPRRRLALACLLASISGASFG). H434 contributes to the Zn(2+) binding site. Residue E435 is part of the active site. Residue H438 coordinates Zn(2+). The interval 562–585 (EVTPENPDTDPDTPTEPSDGVTQL) is disordered.

The protein belongs to the peptidase M9A family. Zn(2+) serves as cofactor.

The protein localises to the secreted. The catalysed reaction is Digestion of native collagen in the triple helical region at Xaa-|-Gly bonds. With synthetic peptides, a preference is shown for Gly at P3 and P1', Pro and Ala at P2 and P2', and hydroxyproline, Ala or Arg at P3'.. Possesses gelatinolytic activity. The chain is Microbial collagenase from Vibrio vulnificus (strain CMCP6).